Reading from the N-terminus, the 215-residue chain is MEINTVLFDLDGTLINTNELIISSFLHTFETYYPGKYGRKDAIECIGPPLTDSFKRLDPERVEEMVATYRKHNHAHHDKLVEPYEGVYETVKTLHEQGFKLAIVTTKIRETAMKGLKLFGLDEFFDVIVALDDVENVKPNPEPLEKAMNALGAKKEETIMVGDNSHDILGGKNAGVKTAVVGYAIRGEDYVRQFDPDYVLRSMPDLLDIVGVKAR.

Asp9 (nucleophile) is an active-site residue.

It belongs to the HAD-like hydrolase superfamily. PpaX family. It depends on Mg(2+) as a cofactor.

It catalyses the reaction diphosphate + H2O = 2 phosphate + H(+). Functionally, hydrolyzes pyrophosphate formed during P-Ser-HPr dephosphorylation by HPrK/P. Might play a role in controlling the intracellular pyrophosphate pool. The chain is Pyrophosphatase PpaX from Halalkalibacterium halodurans (strain ATCC BAA-125 / DSM 18197 / FERM 7344 / JCM 9153 / C-125) (Bacillus halodurans).